The sequence spans 274 residues: Serine/threonine-protein kinase 1 (274 aa).

Residues 16–273 (AVLAPKVVNG…HSFLASRHDY (258 aa)) enclose the Protein kinase domain. ATP is bound by residues 22-30 (VVNGRFGKM) and Lys46. Asp134 functions as the Proton acceptor in the catalytic mechanism.

This sequence belongs to the protein kinase superfamily. Ser/Thr protein kinase family.

It carries out the reaction L-seryl-[protein] + ATP = O-phospho-L-seryl-[protein] + ADP + H(+). The enzyme catalyses L-threonyl-[protein] + ATP = O-phospho-L-threonyl-[protein] + ADP + H(+). In Orgyia pseudotsugata multicapsid polyhedrosis virus (OpMNPV), this protein is Serine/threonine-protein kinase 1 (PK1).